The primary structure comprises 438 residues: Probable glucose-6-phosphate isomerase (438 aa).

The Proton donor role is filled by Glu-280. Residues His-301 and Lys-410 contribute to the active site.

This sequence belongs to the GPI family.

Its subcellular location is the cytoplasm. It carries out the reaction alpha-D-glucose 6-phosphate = beta-D-fructose 6-phosphate. It participates in carbohydrate biosynthesis; gluconeogenesis. The protein operates within carbohydrate degradation; glycolysis; D-glyceraldehyde 3-phosphate and glycerone phosphate from D-glucose: step 2/4. In terms of biological role, catalyzes the reversible isomerization of glucose-6-phosphate to fructose-6-phosphate. The chain is Probable glucose-6-phosphate isomerase from Methanococcus maripaludis (strain DSM 14266 / JCM 13030 / NBRC 101832 / S2 / LL).